Consider the following 324-residue polypeptide: MSRPSSTGPSANKPCSKQPPPQPQHTPSPAAPPAAATISAAGPGSSAVPAAAAVISGPGGGGGAGPVSPQHHELTSLFECPVCFDYVLPPILQCQAGHLVCNQCRQKLSCCPTCRGALTPSIRNLAMEKVASAVLFPCKYATTGCSLTLHHTEKPEHEDICEYRPYSCPCPGASCKWQGSLEAVMSHLMHAHKSITTLQGEDIVFLATDINLPGAVDWVMMQSCFGHHFMLVLEKQEKYEGHQQFFAIVLLIGTRKQAENFAYRLELNGNRRRLTWEATPRSIHDGVAAAIMNSDCLVFDTAIAHLFADNGNLGINVTISTCCP.

Over residues 1–15 (MSRPSSTGPSANKPC) the composition is skewed to polar residues. The disordered stretch occupies residues 1-42 (MSRPSSTGPSANKPCSKQPPPQPQHTPSPAAPPAAATISAAG). Residue S6 is modified to Phosphoserine. S16 carries the post-translational modification Phosphoserine; by DYRK2. The segment covering 17–32 (KQPPPQPQHTPSPAAP) has biased composition (pro residues). Phosphothreonine; by DYRK2 is present on T26. S28 bears the Phosphoserine; by DYRK2 and MAPK14 mark. Positions 33 to 42 (PAAATISAAG) are enriched in low complexity. A Phosphoserine; by DYRK2 modification is found at S68. An RING-type zinc finger spans residues 80-115 (CPVCFDYVLPPILQCQAGHLVCNQCRQKLSCCPTCR). At T119 the chain carries Phosphothreonine; by DYRK2. The segment at 130 to 322 (VASAVLFPCK…LGINVTISTC (193 aa)) is SBD. The SIAH-type zinc finger occupies 133–193 (AVLFPCKYAT…VMSHLMHAHK (61 aa)). Positions 138, 145, 157, 161, 168, 175, 187, and 192 each coordinate Zn(2+).

Belongs to the SINA (Seven in absentia) family. In terms of assembly, homodimer. Interacts with UBE2E2. Interacts with PEG3. Interacts with VAV1, without mediating its ubiquitin-mediated degradation. Interacts with CACYBP/SIP. Probable component of some large E3 complex possibly composed of UBE2D1, SIAH2, CACYBP/SIP, SKP1, APC and TBL1X. Interacts with PEG10, which may inhibit its activity. Interacts with EGLN2 and SNCAIP. Interacts with DYRK2. Interacts with NR1D1 and NR1D2. Interacts with DCC. Interacts with AXIN1. In terms of processing, phosphorylated at Ser-28 by MAPK14, which mediates the degradation by the proteasome of EGLN3. Phosphorylated at Ser-28 by DYRK2; this increases the ubiquitin ligase activity and promotes degradation of EGLN3. As to expression, widely expressed at low level.

The protein localises to the cytoplasm. Its subcellular location is the nucleus. It catalyses the reaction S-ubiquitinyl-[E2 ubiquitin-conjugating enzyme]-L-cysteine + [acceptor protein]-L-lysine = [E2 ubiquitin-conjugating enzyme]-L-cysteine + N(6)-ubiquitinyl-[acceptor protein]-L-lysine.. It participates in protein modification; protein ubiquitination. Its activity is regulated as follows. Inhibited by interaction with SNCAIP (isoform 2, but not isoform 1). May be inhibited by interaction with PEG10. Its function is as follows. E3 ubiquitin-protein ligase that mediates ubiquitination and subsequent proteasomal degradation of target proteins. E3 ubiquitin ligases accept ubiquitin from an E2 ubiquitin-conjugating enzyme in the form of a thioester and then directly transfers the ubiquitin to targeted substrates. Mediates E3 ubiquitin ligase activity either through direct binding to substrates or by functioning as the essential RING domain subunit of larger E3 complexes. Triggers the ubiquitin-mediated degradation of many substrates, including proteins involved in transcription regulation (GPS2, POU2AF1, PML, NCOR1), a cell surface receptor (DCC), an antiapoptotic protein (BAG1), and a protein involved in synaptic vesicle function in neurons (SYP). Mediates ubiquitination and proteasomal degradation of DYRK2 in response to hypoxia. It is thereby involved in apoptosis, tumor suppression, cell cycle, transcription and signaling processes. Has some overlapping function with SIAH1. Triggers the ubiquitin-mediated degradation of TRAF2, whereas SIAH1 does not. Promotes monoubiquitination of SNCA. Regulates cellular clock function via ubiquitination of the circadian transcriptional repressors NR1D1 and NR1D2 leading to their proteasomal degradation. Plays an important role in mediating the rhythmic degradation/clearance of NR1D1 and NR1D2 contributing to their circadian profile of protein abundance. Mediates ubiquitination and degradation of EGLN2 and EGLN3 in response to the unfolded protein response (UPR), leading to their degradation and subsequent stabilization of ATF4. Also part of the Wnt signaling pathway in which it mediates the Wnt-induced ubiquitin-mediated proteasomal degradation of AXIN1. This Homo sapiens (Human) protein is E3 ubiquitin-protein ligase SIAH2 (SIAH2).